Consider the following 217-residue polypeptide: GRB2-related adapter protein (217 aa).

Residues 1–58 (MESVALYSFQATESDELAFNKGDTLKILNMEDDQNWYKAELRGAEGFVPKNYIRVKPH) enclose the SH3 1 domain. The SH2 domain maps to 60–152 (WYSGRISRQL…RRQIFLCDEQ (93 aa)). Positions 158–217 (SRACFAQAQFDFSAQDPSQLSLRRGDIVEVVEREDPHWWRGRAGGRLGFFPRSYVQPVHL) constitute an SH3 2 domain.

It belongs to the GRB2/sem-5/DRK family. Associates through its SH2 domain with ligand-activated receptors for stem cell factor (KIT) and erythropoietin (EPOR). Also forms a stable complex with the Bcr-Abl oncoprotein. GRAP is associated with the Ras guanine nucleotide exchange factor SOS1, primarily through its N-terminal SH3 domain. Interacts with phosphorylated LAT upon TCR activation. Interacts with SHB. As to expression, expressed in inner ear, in neruonal fibers innervating cochlear and utricular auditory hair cells (at protein level).

The protein localises to the membrane. It is found in the synapse. In terms of biological role, couples signals from receptor and cytoplasmic tyrosine kinases to the Ras signaling pathway. Plays a role in the inner ear and in hearing. This Mus musculus (Mouse) protein is GRB2-related adapter protein.